The following is a 294-amino-acid chain: Protease HtpX (294 aa).

2 helical membrane-spanning segments follow: residues 4–24 (IALF…VLSL) and 34–52 (GLLI…VSLM). Zn(2+) is bound at residue histidine 139. The active site involves glutamate 140. Histidine 143 lines the Zn(2+) pocket. Helical transmembrane passes span 158 to 178 (VVNT…AGFL) and 194 to 214 (LIYF…ASII). Glutamate 223 contributes to the Zn(2+) binding site.

The protein belongs to the peptidase M48B family. Zn(2+) serves as cofactor.

It localises to the cell inner membrane. This Klebsiella pneumoniae subsp. pneumoniae (strain ATCC 700721 / MGH 78578) protein is Protease HtpX.